Here is a 188-residue protein sequence, read N- to C-terminus: Mitochondrial import inner membrane translocase subunit TIM23-2 (188 aa).

Transmembrane regions (helical) follow at residues 64–84 (TGTA…ITGV), 112–131 (GNRI…GIVA), 138–154 (VWTS…VCRA), and 161–178 (AAVA…VVAG).

It belongs to the Tim17/Tim22/Tim23 family. In terms of assembly, homomultimer. Component of the TIM17:23 complex at least composed of TIM23, TIM17 and TIM50. The complex interacts with the TIM44 component of the PAM complex. Also part of the NADH-ubiquinone oxidoreductase complex I. Interacts with OEP163, TIM17-2, TIM21, TIM50 and MPPA2. Expressed in roots and young cotyledons. Detected in leaves and flowers.

Its subcellular location is the mitochondrion inner membrane. Its function is as follows. Essential component of the TIM17:23 complex, a complex that mediates the translocation of transit peptide-containing proteins across the mitochondrial inner membrane. Links the inner and outer membranes. This Arabidopsis thaliana (Mouse-ear cress) protein is Mitochondrial import inner membrane translocase subunit TIM23-2 (TIM23-2).